The chain runs to 304 residues: 2-phospho-L-lactate transferase (304 aa).

A 7,8-didemethyl-8-hydroxy-5-deazariboflavin-binding site is contributed by Asp49.

Belongs to the CofD family. As to quaternary structure, homodimer. Requires Mg(2+) as cofactor.

It carries out the reaction (2S)-lactyl-2-diphospho-5'-guanosine + 7,8-didemethyl-8-hydroxy-5-deazariboflavin = oxidized coenzyme F420-0 + GMP + H(+). It functions in the pathway cofactor biosynthesis; coenzyme F420 biosynthesis. Functionally, catalyzes the transfer of the 2-phospholactate moiety from (2S)-lactyl-2-diphospho-5'-guanosine to 7,8-didemethyl-8-hydroxy-5-deazariboflavin (FO) with the formation of oxidized coenzyme F420-0 and GMP. The sequence is that of 2-phospho-L-lactate transferase from Methanocorpusculum labreanum (strain ATCC 43576 / DSM 4855 / Z).